The following is a 747-amino-acid chain: Heterogeneous nuclear ribonucleoprotein U-like protein 2 (747 aa).

One can recognise an SAP domain in the interval 3–37; sequence VKRLKVTELRSELQRRGLDSRGLKVDLAQRLQEAL. 2 disordered regions span residues 40 to 242 and 627 to 666; these read EMLE…EEED and EEAR…GQRR. Residues 73 to 97 are compositionally biased toward acidic residues; that stretch reads GDEEEDEEEEEEDEEALLEDEDEEP. Residues 115-125 are compositionally biased toward low complexity; sequence EAAAMEAAAEP. Residues 137 to 147 show a composition bias toward gly residues; the sequence is GSGGVNGGEEQ. Residues 148-163 are compositionally biased toward basic and acidic residues; sequence GLGKREEDEPEERSGD. Ser161 carries the phosphoserine modification. Thr165 is subject to Phosphothreonine. Phosphoserine is present on residues Ser168, Ser185, Ser188, Ser226, and Ser228. The segment covering 185–223 has biased composition (basic and acidic residues); that stretch reads SEKSKPAGSDGERRGVKRQRDEKDEHGRAYYEFREEAYH. Residues 226–419 form the B30.2/SPRY domain; that stretch reads SKSPLPPEEE…VELNFGQKEE (194 aa). The span at 232–242 shows a compositional bias: acidic residues; the sequence is PEEEAKDEEED. Basic and acidic residues predominate over residues 627-639; sequence EEARKLLPPSEKR. Residues 640–654 show a composition bias toward basic residues; sequence TNRRNNRNKRNRQNR. Omega-N-methylarginine is present on residues Arg656, Arg684, Arg738, and Arg747.

In terms of assembly, binds to MLF1 and retains it in the nucleus.

Its subcellular location is the nucleus. The protein is Heterogeneous nuclear ribonucleoprotein U-like protein 2 (HNRNPUL2) of Homo sapiens (Human).